We begin with the raw amino-acid sequence, 300 residues long: NADH-cytochrome b5 reductase 1 (300 aa).

The chain crosses the membrane as a helical span at residues 8–28; that stretch reads PLVVFATVATIIISFVTLYFF. Low complexity predominate over residues 34 to 45; the sequence is SSTTSSSSSSSS. A disordered region spans residues 34-54; that stretch reads SSTTSSSSSSSSKSKKGSPAL. Positions 57-160 constitute an FAD-binding FR-type domain; that stretch reads DKFQKFPLIS…RGPKGFFTYT (104 aa). FAD is bound by residues 140–155 and 166–198; these read AEKQ…GPKG and SLGL…KVHL.

This sequence belongs to the flavoprotein pyridine nucleotide cytochrome reductase family. As to quaternary structure, monomer. Component of the 2-(3-amino-3-carboxypropyl)histidine synthase complex composed of DPH1, DPH2, DPH3 and a NADH-dependent reductase, predominantly CBR1. Requires FAD as cofactor.

It localises to the mitochondrion outer membrane. The catalysed reaction is 2 Fe(III)-[cytochrome b5] + NADH = 2 Fe(II)-[cytochrome b5] + NAD(+) + H(+). The enzyme catalyses 2 Fe(3+)-[Dph3] + NADH = 2 Fe(2+)-[Dph3] + NAD(+) + H(+). It functions in the pathway protein modification; peptidyl-diphthamide biosynthesis. Functionally, NADH-dependent reductase for DPH3 and cytochrome b5. Required for the first step of diphthamide biosynthesis, a post-translational modification of histidine which occurs in elongation factor 2. DPH1 and DPH2 transfer a 3-amino-3-carboxypropyl (ACP) group from S-adenosyl-L-methionine (SAM) to a histidine residue, the reaction is assisted by a reduction system comprising DPH3 and a NADH-dependent reductase, predominantly CBR1. By reducing DPH3, also involved in the formation of the tRNA wobble base modification mcm5s 2U (5-methoxycarbonylmethyl-2-thiouridine), mediated by the elongator complex. The cytochrome b5/NADH cytochrome b5 reductase electron transfer system supports the catalytic activity of several sterol biosynthetic enzymes. The polypeptide is NADH-cytochrome b5 reductase 1 (CBR1) (Lodderomyces elongisporus (strain ATCC 11503 / CBS 2605 / JCM 1781 / NBRC 1676 / NRRL YB-4239) (Yeast)).